A 505-amino-acid polypeptide reads, in one-letter code: Cell division control protein 6 homolog B (505 aa).

The interval 37-72 (KRKMRSDSAAVSGNSVSTPKKLKSHLPSSVPNPGMS) is disordered. Residues 45–54 (AAVSGNSVST) are compositionally biased toward polar residues.

The protein belongs to the CDC6/cdc18 family.

It localises to the nucleus. In terms of biological role, may be involved in the initiation of DNA replication. The protein is Cell division control protein 6 homolog B of Arabidopsis thaliana (Mouse-ear cress).